The primary structure comprises 565 residues: Periplasmic trehalase (565 aa).

An N-terminal signal peptide occupies residues 1–30; it reads MKSPAPSRPQKMALIPACIFLCFAALSVQA. Residues Arg-152, 159–160, Asn-196, 205–207, 277–279, and Gly-310 contribute to the substrate site; these read WD, RSQ, and RPE. Catalysis depends on proton donor/acceptor residues Asp-312 and Glu-496. Residue Glu-511 coordinates substrate. The interval 539–565 is disordered; that stretch reads CDNVPATRPLSESTTQPVKQKEAEPTP.

Belongs to the glycosyl hydrolase 37 family. Monomer.

It localises to the periplasm. The catalysed reaction is alpha,alpha-trehalose + H2O = alpha-D-glucose + beta-D-glucose. Provides the cells with the ability to utilize trehalose at high osmolarity by splitting it into glucose molecules that can subsequently be taken up by the phosphotransferase-mediated uptake system. In Escherichia coli O6:H1 (strain CFT073 / ATCC 700928 / UPEC), this protein is Periplasmic trehalase.